A 361-amino-acid polypeptide reads, in one-letter code: Histidinol-phosphate aminotransferase (361 aa).

Lysine 219 bears the N6-(pyridoxal phosphate)lysine mark.

It belongs to the class-II pyridoxal-phosphate-dependent aminotransferase family. Histidinol-phosphate aminotransferase subfamily. In terms of assembly, homodimer. It depends on pyridoxal 5'-phosphate as a cofactor.

The enzyme catalyses L-histidinol phosphate + 2-oxoglutarate = 3-(imidazol-4-yl)-2-oxopropyl phosphate + L-glutamate. It functions in the pathway amino-acid biosynthesis; L-histidine biosynthesis; L-histidine from 5-phospho-alpha-D-ribose 1-diphosphate: step 7/9. The chain is Histidinol-phosphate aminotransferase from Acinetobacter baumannii (strain ATCC 17978 / DSM 105126 / CIP 53.77 / LMG 1025 / NCDC KC755 / 5377).